Consider the following 159-residue polypeptide: Calcium-binding protein CML39 (159 aa).

EF-hand domains are found at residues 18–53 (EKNR…LGEQ), 54–89 (MSDE…NDEF), 93–128 (EKKR…LGES), and 129–159 (RTTD…LMMR). 10 residues coordinate Ca(2+): Asp31, Asn33, Asp35, Arg37, Glu42, Asp67, Asp69, Asp71, Met73, and Glu78. Ca(2+)-binding residues include Asp142, Asn144, Asp146, and Glu153.

Expressed in the zones of elongation and differentiation in seedling roots and at the root-hypocotyl junction. Expressed from stage 12 of flower development in anthers, specifically in pollen.

Potential calcium sensor that binds calcium in vitro. The sequence is that of Calcium-binding protein CML39 (CML39) from Arabidopsis thaliana (Mouse-ear cress).